The sequence spans 40 residues: Ice-structuring protein GS-8 (40 aa).

The residue at position 1 (M1) is a Blocked amino end (Met).

The protein belongs to the type-I AFP family.

In terms of biological role, antifreeze proteins lower the blood freezing point. This is Ice-structuring protein GS-8 from Myoxocephalus aenaeus (Grubby sculpin).